A 614-amino-acid chain; its full sequence is Fimbrin (614 aa).

EF-hand domains are found at residues 16–50 and 51–86; these read EEIL…DSKK and GSYD…LKKG. 8 residues coordinate Ca(2+): aspartate 29, aspartate 31, tyrosine 35, threonine 40, aspartate 66, serine 68, arginine 70, and aspartate 75. 2 actin-binding regions span residues 98 to 368 and 369 to 614; these read TIKG…GLEP and LNEE…LMAV. 4 Calponin-homology (CH) domains span residues 112 to 233, 261 to 364, 385 to 495, and 508 to 614; these read EEER…RRGL, LPPE…NTHP, EREA…RMNI, and TLSD…LMAV.

It localises to the cytoplasm. Its subcellular location is the cytoskeleton. The protein resides in the actin patch. In terms of biological role, binds to actin, and functionally associates with actin structures involved in the development and maintenance of cell polarity. Plays a role in cytokinesis. Plays important roles in mating and in spore formation. This is Fimbrin (fim1) from Schizosaccharomyces pombe (strain 972 / ATCC 24843) (Fission yeast).